Here is a 444-residue protein sequence, read N- to C-terminus: Glutamyl-tRNA reductase (444 aa).

Residues 49 to 52 (TCNR), S109, 114 to 116 (ETQ), and Q120 each bind substrate. C50 functions as the Nucleophile in the catalytic mechanism. 189–194 (GAGKMG) contacts NADP(+).

The protein belongs to the glutamyl-tRNA reductase family. In terms of assembly, homodimer.

It catalyses the reaction (S)-4-amino-5-oxopentanoate + tRNA(Glu) + NADP(+) = L-glutamyl-tRNA(Glu) + NADPH + H(+). It functions in the pathway porphyrin-containing compound metabolism; protoporphyrin-IX biosynthesis; 5-aminolevulinate from L-glutamyl-tRNA(Glu): step 1/2. Its function is as follows. Catalyzes the NADPH-dependent reduction of glutamyl-tRNA(Glu) to glutamate 1-semialdehyde (GSA). In Bacillus cereus (strain 03BB102), this protein is Glutamyl-tRNA reductase.